Consider the following 380-residue polypeptide: uncharacterized protein (380 aa).

This is an uncharacterized protein from Methanocaldococcus jannaschii (strain ATCC 43067 / DSM 2661 / JAL-1 / JCM 10045 / NBRC 100440) (Methanococcus jannaschii).